Here is a 161-residue protein sequence, read N- to C-terminus: MKISLISAISNNLVIGHNNKIPWYLPEDLKWFKKNTIHKDIIMGRLTWESILNHPLPMRKNIVISHKEIIHKDVIWANSISKALLSTTYDKEIMVIGGSKIYKQMLFYATKLYLTHVDFNGIGDTYFPQYKSCKFWKTIFRKQHFKDKNNPYNFCFEILSR.

In terms of domain architecture, DHFR spans 2–161 (KISLISAISN…YNFCFEILSR (160 aa)). Substrate is bound at residue 6 to 8 (ISA). NADP(+) is bound by residues 7 to 8 (SA) and 15 to 20 (IGHNNK). Asp-28 is a substrate binding site. 44 to 47 (GRLT) provides a ligand contact to NADP(+). Residue Arg-59 coordinates substrate. Residues 64 to 66 (ISH) and 96 to 101 (IGGSKI) contribute to the NADP(+) site. Thr-115 contacts substrate.

The protein belongs to the dihydrofolate reductase family.

It catalyses the reaction (6S)-5,6,7,8-tetrahydrofolate + NADP(+) = 7,8-dihydrofolate + NADPH + H(+). It participates in cofactor biosynthesis; tetrahydrofolate biosynthesis; 5,6,7,8-tetrahydrofolate from 7,8-dihydrofolate: step 1/1. Key enzyme in folate metabolism. Catalyzes an essential reaction for de novo glycine and purine synthesis, and for DNA precursor synthesis. This Buchnera aphidicola subsp. Schizaphis graminum (strain Sg) protein is Dihydrofolate reductase (folA).